Consider the following 415-residue polypeptide: Peptide chain release factor subunit 1 (415 aa).

The protein belongs to the eukaryotic release factor 1 family. In terms of assembly, heterodimer of two subunits, one of which binds GTP.

It is found in the cytoplasm. In terms of biological role, directs the termination of nascent peptide synthesis (translation) in response to the termination codons UAA, UAG and UGA. This chain is Peptide chain release factor subunit 1, found in Methanosarcina mazei (strain ATCC BAA-159 / DSM 3647 / Goe1 / Go1 / JCM 11833 / OCM 88) (Methanosarcina frisia).